The following is a 424-amino-acid chain: Serine hydroxymethyltransferase (424 aa).

(6S)-5,6,7,8-tetrahydrofolate is bound by residues Leu-118 and 122–124 (GHL). N6-(pyridoxal phosphate)lysine is present on Lys-227. (6S)-5,6,7,8-tetrahydrofolate-binding positions include Glu-243 and 351–353 (SPF).

Belongs to the SHMT family. In terms of assembly, homodimer. Pyridoxal 5'-phosphate serves as cofactor.

It is found in the cytoplasm. It carries out the reaction (6R)-5,10-methylene-5,6,7,8-tetrahydrofolate + glycine + H2O = (6S)-5,6,7,8-tetrahydrofolate + L-serine. It participates in one-carbon metabolism; tetrahydrofolate interconversion. Its pathway is amino-acid biosynthesis; glycine biosynthesis; glycine from L-serine: step 1/1. Catalyzes the reversible interconversion of serine and glycine with tetrahydrofolate (THF) serving as the one-carbon carrier. This reaction serves as the major source of one-carbon groups required for the biosynthesis of purines, thymidylate, methionine, and other important biomolecules. Also exhibits THF-independent aldolase activity toward beta-hydroxyamino acids, producing glycine and aldehydes, via a retro-aldol mechanism. The chain is Serine hydroxymethyltransferase from Thermosipho africanus (strain TCF52B).